The primary structure comprises 150 residues: Large ribosomal subunit protein bL9 (150 aa).

This sequence belongs to the bacterial ribosomal protein bL9 family.

Binds to the 23S rRNA. The protein is Large ribosomal subunit protein bL9 of Hamiltonella defensa subsp. Acyrthosiphon pisum (strain 5AT).